The sequence spans 149 residues: D-aminoacyl-tRNA deacylase (149 aa).

The Gly-cisPro motif, important for rejection of L-amino acids motif lies at 137-138; it reads GP.

This sequence belongs to the DTD family. Homodimer.

It is found in the cytoplasm. The catalysed reaction is glycyl-tRNA(Ala) + H2O = tRNA(Ala) + glycine + H(+). It catalyses the reaction a D-aminoacyl-tRNA + H2O = a tRNA + a D-alpha-amino acid + H(+). In terms of biological role, an aminoacyl-tRNA editing enzyme that deacylates mischarged D-aminoacyl-tRNAs. Also deacylates mischarged glycyl-tRNA(Ala), protecting cells against glycine mischarging by AlaRS. Acts via tRNA-based rather than protein-based catalysis; rejects L-amino acids rather than detecting D-amino acids in the active site. By recycling D-aminoacyl-tRNA to D-amino acids and free tRNA molecules, this enzyme counteracts the toxicity associated with the formation of D-aminoacyl-tRNA entities in vivo and helps enforce protein L-homochirality. This Clostridium acetobutylicum (strain ATCC 824 / DSM 792 / JCM 1419 / IAM 19013 / LMG 5710 / NBRC 13948 / NRRL B-527 / VKM B-1787 / 2291 / W) protein is D-aminoacyl-tRNA deacylase.